The primary structure comprises 538 residues: Putative cysteine ligase BshC (538 aa).

Positions 460–484 form a coiled coil; that stretch reads KINEQIELLERMLKRNVEKKHEVEL.

It belongs to the BshC family.

Its function is as follows. Involved in bacillithiol (BSH) biosynthesis. May catalyze the last step of the pathway, the addition of cysteine to glucosamine malate (GlcN-Mal) to generate BSH. The protein is Putative cysteine ligase BshC of Bacillus anthracis (strain A0248).